Here is a 447-residue protein sequence, read N- to C-terminus: Adenylosuccinate synthetase (447 aa).

GTP-binding positions include 12–18 (GDEGKGK) and 40–42 (GHT). Aspartate 13 (proton acceptor) is an active-site residue. Residues aspartate 13 and glycine 40 each contribute to the Mg(2+) site. Residues 13-16 (DEGK), 38-41 (NAGH), threonine 128, arginine 142, glutamine 223, threonine 238, and arginine 302 contribute to the IMP site. The active-site Proton donor is the histidine 41. 298 to 304 (TTTGRKR) is a binding site for substrate. GTP is bound by residues arginine 304, 330 to 332 (KLD), and 412 to 414 (SLG).

This sequence belongs to the adenylosuccinate synthetase family. In terms of assembly, homodimer. Mg(2+) is required as a cofactor.

Its subcellular location is the cytoplasm. It catalyses the reaction IMP + L-aspartate + GTP = N(6)-(1,2-dicarboxyethyl)-AMP + GDP + phosphate + 2 H(+). It functions in the pathway purine metabolism; AMP biosynthesis via de novo pathway; AMP from IMP: step 1/2. Plays an important role in the de novo pathway of purine nucleotide biosynthesis. Catalyzes the first committed step in the biosynthesis of AMP from IMP. The protein is Adenylosuccinate synthetase of Nostoc sp. (strain PCC 7120 / SAG 25.82 / UTEX 2576).